The primary structure comprises 463 residues: Nitrogenase vanadium-iron protein beta chain (463 aa).

[8Fe-7S] cluster is bound by residues cysteine 20, cysteine 45, cysteine 104, and serine 142.

The protein belongs to the NifD/NifK/NifE/NifN family. In terms of assembly, hexamer of two alpha, two beta, and two delta chains. Requires [8Fe-7S] cluster as cofactor.

It catalyses the reaction N2 + 8 reduced [2Fe-2S]-[ferredoxin] + 16 ATP + 16 H2O = H2 + 8 oxidized [2Fe-2S]-[ferredoxin] + 2 NH4(+) + 16 ADP + 16 phosphate + 6 H(+). This vanadium-iron protein is part of the nitrogenase complex that catalyzes the key enzymatic reactions in nitrogen fixation. The sequence is that of Nitrogenase vanadium-iron protein beta chain (vnfK) from Trichormus variabilis (strain ATCC 29413 / PCC 7937) (Anabaena variabilis).